A 20-amino-acid polypeptide reads, in one-letter code: Trypsin inhibitor (20 aa).

The segment at 1 to 20 (APSDTTIAETLTITEEFFPD) is disordered.

Hemolymph.

The protein localises to the secreted. It is found in the extracellular space. Its function is as follows. Inhibits trypsin stoichiometrically. Also inhibits chymotrypsin very weakly. The polypeptide is Trypsin inhibitor (Mythimna unipuncta (Armyworm moth)).